We begin with the raw amino-acid sequence, 409 residues long: MSQAEFPITPEVEADLRIARRGCDELLVESEFARKLARSRATGVPLRIKLGLDPTAPDIHLGHTVVLNKMRQLQDLGHTVIFLIGDFTSTIGDPSGRNSTRPPLTREQIEHNAKTYYAQASLVLDPARTEIRYNSEWCDPLGARGMIQLASRYTVARMMEREDFTRRFKTGVPIAVHEFLYPLMQGYDSVALKADLELGGTDQKFNLLVGRELQKEYGQEPQCILTMPLLVGTDGVDKMSKSKGNYIGISESPDSMFGKLMSISDTLMWRYFELLSFRSLEDIAALKAEIDAGRNPRDAKVALAQEIITRFHSAKDAEQALANFEARFRDGAIPDDIPEVNLAGAPMGILHVLRASSLCASSSEAQRAIEQGGVKIDGAKIEDRSLQLNAGSYVLQVGKRKFARVNLAV.

The 'HIGH' region motif lies at Pro-54–His-63. Positions Lys-238–Ser-242 match the 'KMSKS' region motif. Residue Lys-241 coordinates ATP. The S4 RNA-binding domain occupies Met-347–Leu-407.

It belongs to the class-I aminoacyl-tRNA synthetase family. TyrS type 2 subfamily. As to quaternary structure, homodimer.

It is found in the cytoplasm. It catalyses the reaction tRNA(Tyr) + L-tyrosine + ATP = L-tyrosyl-tRNA(Tyr) + AMP + diphosphate + H(+). Its function is as follows. Catalyzes the attachment of tyrosine to tRNA(Tyr) in a two-step reaction: tyrosine is first activated by ATP to form Tyr-AMP and then transferred to the acceptor end of tRNA(Tyr). In Bordetella avium (strain 197N), this protein is Tyrosine--tRNA ligase.